The chain runs to 450 residues: Deoxyguanosinetriphosphate triphosphohydrolase-like protein (450 aa).

In terms of domain architecture, HD spans 61–201 (RLTHSLEVAQ…AKLAPELNAD (141 aa)).

This sequence belongs to the dGTPase family. Type 2 subfamily.

The protein is Deoxyguanosinetriphosphate triphosphohydrolase-like protein of Pasteurella multocida (strain Pm70).